A 547-amino-acid chain; its full sequence is Chaperonin GroEL (547 aa).

ATP-binding positions include 30–33 (TLGP), lysine 51, 87–91 (DGTTT), glycine 415, and aspartate 495. The segment at 526-547 (KKESAGGGGMPGGMGGMGGMDF) is disordered. Gly residues predominate over residues 530–547 (AGGGGMPGGMGGMGGMDF).

It belongs to the chaperonin (HSP60) family. In terms of assembly, forms a cylinder of 14 subunits composed of two heptameric rings stacked back-to-back. Interacts with the co-chaperonin GroES.

The protein localises to the cytoplasm. It catalyses the reaction ATP + H2O + a folded polypeptide = ADP + phosphate + an unfolded polypeptide.. Functionally, together with its co-chaperonin GroES, plays an essential role in assisting protein folding. The GroEL-GroES system forms a nano-cage that allows encapsulation of the non-native substrate proteins and provides a physical environment optimized to promote and accelerate protein folding. The protein is Chaperonin GroEL of Hyphomonas neptunium (strain ATCC 15444).